An 84-amino-acid polypeptide reads, in one-letter code: Hydramacin-1 (84 aa).

The signal sequence occupies residues 1-24 (MRTVVFFILVSIFLVALKPTGTQA). A Pyrrolidone carboxylic acid modification is found at Gln25. Cystine bridges form between Cys29–Cys72, Cys36–Cys65, Cys51–Cys81, and Cys55–Cys83.

In terms of tissue distribution, expressed in the endodermal epithelium.

It is found in the secreted. Its subcellular location is the target cell membrane. Cationic antimicrobial peptide potently active against Gram-positive and Gram-negative bacteria including multi-resistant human pathogenic strains. Is not active against the Gram-positive Coccus species, Gram-negative non-fermentation species and against the fungus C.albicans. It leads to aggregation of bacteria as an initial step of its bactericidal mechanism. Aggregated cells are connected via electron-dense contacts and adopt a thorn apple-like morphology. Hydramycin contains a belt of positively charged residues that separate two hydrophobic areas. This structure may explain the observed aggregation of bacteria, since each of these areas can immerse into the outer leaflets of the membranes of two individual bacteria. Is able to permeabilize membranes of viable bacteria at low and neutral pH values, but no pore-forming activity is not detected. The polypeptide is Hydramacin-1 (Hydra vulgaris (Hydra)).